Consider the following 38-residue polypeptide: Defensin-1 (38 aa).

3 disulfide bridges follow: cysteine 4/cysteine 25, cysteine 11/cysteine 33, and cysteine 15/cysteine 35.

The protein resides in the secreted. Has antibacterial activity against the Gram-positive bacteria L.lactis and S.aureus, and against the Gram-negative bacteria E.coli D32 and V.parahemolyticus. The protein is Defensin-1 of Crassostrea virginica (Eastern oyster).